We begin with the raw amino-acid sequence, 337 residues long: RNA 3'-terminal phosphate cyclase (337 aa).

ATP is bound by residues Gln101 and His282–Asp285. His306 functions as the Tele-AMP-histidine intermediate in the catalytic mechanism.

It belongs to the RNA 3'-terminal cyclase family. Type 1 subfamily.

It is found in the cytoplasm. The catalysed reaction is a 3'-end 3'-phospho-ribonucleotide-RNA + ATP = a 3'-end 2',3'-cyclophospho-ribonucleotide-RNA + AMP + diphosphate. Its function is as follows. Catalyzes the conversion of 3'-phosphate to a 2',3'-cyclic phosphodiester at the end of RNA. The mechanism of action of the enzyme occurs in 3 steps: (A) adenylation of the enzyme by ATP; (B) transfer of adenylate to an RNA-N3'P to produce RNA-N3'PP5'A; (C) and attack of the adjacent 2'-hydroxyl on the 3'-phosphorus in the diester linkage to produce the cyclic end product. The biological role of this enzyme is unknown but it is likely to function in some aspects of cellular RNA processing. In Saccharolobus islandicus (strain L.S.2.15 / Lassen #1) (Sulfolobus islandicus), this protein is RNA 3'-terminal phosphate cyclase.